The sequence spans 349 residues: tRNA N6-adenosine threonylcarbamoyltransferase (349 aa).

Fe cation is bound by residues His-116 and His-120. Residues 139 to 143, Asp-172, Gly-185, and Asn-283 contribute to the substrate site; that span reads LVSGG. Position 311 (Asp-311) interacts with Fe cation.

Belongs to the KAE1 / TsaD family. Requires Fe(2+) as cofactor.

Its subcellular location is the cytoplasm. The enzyme catalyses L-threonylcarbamoyladenylate + adenosine(37) in tRNA = N(6)-L-threonylcarbamoyladenosine(37) in tRNA + AMP + H(+). Its function is as follows. Required for the formation of a threonylcarbamoyl group on adenosine at position 37 (t(6)A37) in tRNAs that read codons beginning with adenine. Is involved in the transfer of the threonylcarbamoyl moiety of threonylcarbamoyl-AMP (TC-AMP) to the N6 group of A37, together with TsaE and TsaB. TsaD likely plays a direct catalytic role in this reaction. The polypeptide is tRNA N6-adenosine threonylcarbamoyltransferase (Colwellia psychrerythraea (strain 34H / ATCC BAA-681) (Vibrio psychroerythus)).